Reading from the N-terminus, the 1156-residue chain is Nitric oxide synthase, inducible (1156 aa).

The short motif at aspartate 23–asparagine 27 is the DINNN-motif; mediates interaction with SPSB1, SPSB2 and SPSB4 element. The segment at asparagine 27–histidine 84 is disordered. The segment covering glutamate 55–serine 70 has biased composition (polar residues). Residues cysteine 110 and cysteine 115 each coordinate Zn(2+). Serine 118 provides a ligand contact to (6R)-L-erythro-5,6,7,8-tetrahydrobiopterin. A heme b-binding site is contributed by cysteine 200. L-arginine is bound by residues glutamine 263, tryptophan 372, tyrosine 373, and glutamate 377. 4 residues coordinate (6R)-L-erythro-5,6,7,8-tetrahydrobiopterin: arginine 381, isoleucine 462, tryptophan 463, and phenylalanine 476. A heme b-binding site is contributed by tyrosine 491. Residues phenylalanine 515–serine 535 are calmodulin-binding. The Flavodoxin-like domain occupies alanine 539 to phenylalanine 677. FMN-binding residues include threonine 545, glutamate 546, threonine 547, arginine 549, and serine 550. Tyrosine 575 carries the phosphotyrosine modification. 6 residues coordinate FMN: serine 591, threonine 592, serine 628, cysteine 635, glutamate 661, and glutamine 665. Positions lysine 730–proline 970 constitute an FAD-binding FR-type domain. Arginine 750 contributes to the NADP(+) binding site. FAD-binding residues include histidine 772, arginine 906, tyrosine 908, serine 909, threonine 924, and alanine 926. Threonine 929 is a binding site for NADP(+). FAD contacts are provided by tyrosine 930, valine 943, cysteine 944, and serine 945. Residues threonine 984, arginine 1017, serine 1046, arginine 1047, lysine 1053, tyrosine 1055, glutamine 1057, and aspartate 1090 each contribute to the NADP(+) site.

Belongs to the NOS family. As to quaternary structure, homodimer. Interacts with NHERF1. Interacts with GAPDH; induced by oxidatively-modified low-densitity lipoprotein (LDL(ox)). Interacts with S100A8 and S100A9 to form the iNOS-S100A8/9 transnitrosylase complex. Interacts with SPSB1, SPSB2 and SPSB4. Interacts with ELOC and CUL5 in the presence of SPSB1 or SPSB2 or SPSB4. Forms a complex with ASL, ASS1 and HSP90AA1; the complex regulates cell-autonomous L-arginine synthesis and citrulline recycling while channeling extracellular L-arginine to nitric oxide synthesis pathway. It depends on heme b as a cofactor. The cofactor is FAD. FMN is required as a cofactor. (6R)-L-erythro-5,6,7,8-tetrahydrobiopterin serves as cofactor. Post-translationally, polyubiquitinated; mediated by SPSB1, SPSB2 and SPSB4, leading to proteasomal degradation.

The protein resides in the cytoplasm. The protein localises to the cytosol. The enzyme catalyses 2 L-arginine + 3 NADPH + 4 O2 + H(+) = 2 L-citrulline + 2 nitric oxide + 3 NADP(+) + 4 H2O. Regulated by calcium/calmodulin. In terms of biological role, produces nitric oxide (NO) which is a messenger molecule with diverse functions throughout the body. In macrophages, NO mediates tumoricidal and bactericidal actions. Also has nitrosylase activity and mediates cysteine S-nitrosylation of cytoplasmic target proteins such PTGS2/COX2. As component of the iNOS-S100A8/9 transnitrosylase complex involved in the selective inflammatory stimulus-dependent S-nitrosylation of GAPDH implicated in regulation of the GAIT complex activity and probably multiple targets including ANXA5, EZR, MSN and VIM. Involved in inflammation, enhances the synthesis of pro-inflammatory mediators such as IL6 and IL8. In Bos taurus (Bovine), this protein is Nitric oxide synthase, inducible (NOS2).